The sequence spans 566 residues: Viral IRF3-like protein (566 aa).

Disordered regions lie at residues 151-170 (PRPFVGENSDSSEEDHPAFC) and 176-236 (QTGA…VHTD).

It belongs to the IRF family. In terms of assembly, interacts with host SKP2. Interacts with host USP7.

Its function is as follows. Plays a role in the inhibition of host immune response. Interferes with the transactivating potential of cellular IRFs IRF3 and IRF7 that play a critical role in the induction of IFNA and IFNB genes. Additionally, interferes with surface major histocompatibility complex class II (MHC-II) antigen presentation. The sequence is that of Viral IRF3-like protein (vIRF-3) from Human herpesvirus 8 type P (isolate GK18) (HHV-8).